The sequence spans 302 residues: N-acetylmuramic acid 6-phosphate etherase (302 aa).

The region spanning 58–221 is the SIS domain; the sequence is IFERFKKGGR…TTTLMIKLGK (164 aa). E86 acts as the Proton donor in catalysis. The active site involves E117.

It belongs to the GCKR-like family. MurNAc-6-P etherase subfamily. As to quaternary structure, homodimer.

The catalysed reaction is N-acetyl-D-muramate 6-phosphate + H2O = N-acetyl-D-glucosamine 6-phosphate + (R)-lactate. It functions in the pathway amino-sugar metabolism; N-acetylmuramate degradation. Specifically catalyzes the cleavage of the D-lactyl ether substituent of MurNAc 6-phosphate, producing GlcNAc 6-phosphate and D-lactate. This Mycoplasma mycoides subsp. mycoides SC (strain CCUG 32753 / NCTC 10114 / PG1) protein is N-acetylmuramic acid 6-phosphate etherase.